The primary structure comprises 348 residues: Protein RecA (348 aa).

Position 71–78 (71–78 (GVESSGKT)) interacts with ATP.

This sequence belongs to the RecA family.

It localises to the cytoplasm. Functionally, can catalyze the hydrolysis of ATP in the presence of single-stranded DNA, the ATP-dependent uptake of single-stranded DNA by duplex DNA, and the ATP-dependent hybridization of homologous single-stranded DNAs. It interacts with LexA causing its activation and leading to its autocatalytic cleavage. In Aquifex pyrophilus, this protein is Protein RecA.